Reading from the N-terminus, the 431-residue chain is Synaptotagmin-11 (431 aa).

Topologically, residues 1-15 (MAEITNIRPSFDVSP) are vesicular. Residues 16 to 36 (VVAGLIGASVLVVCVSVTVFV) traverse the membrane as a helical segment. At 37–431 (WSCCHQQAEK…VAKWHSLSEY (395 aa)) the chain is on the cytoplasmic side. Serine 134 bears the Phosphoserine mark. The disordered stretch occupies residues 134-154 (SPITSLTPGESKTTSPSSPEE). The segment covering 140-151 (TPGESKTTSPSS) has biased composition (low complexity). C2 domains lie at 157–279 (MLGS…QLTR) and 291–426 (SRGE…AKWH). The Ca(2+) site is built by aspartate 250, serine 253, and aspartate 256.

The protein belongs to the synaptotagmin family. In terms of assembly, homodimer. Can also form heterodimers. Interacts with PRKN. Interacts (via C2 2 domain) with AGO2 and SND1; the interaction with SND1 is direct. Interacts with KIF1A; the interaction increases in presence of calcium. Requires Ca(2+) as cofactor. Post-translationally, ubiquitinated, at least by PRKN, and targeted to the proteasome complex for degradation. Ubiquitination is inhibited by ATP13A2.

It localises to the cytoplasmic vesicle membrane. The protein resides in the perikaryon. The protein localises to the golgi apparatus. Its subcellular location is the trans-Golgi network membrane. It is found in the recycling endosome membrane. It localises to the lysosome membrane. The protein resides in the cytoplasmic vesicle. The protein localises to the phagosome. Its subcellular location is the cell projection. It is found in the axon. It localises to the dendrite. The protein resides in the postsynaptic density. The protein localises to the clathrin-coated vesicle membrane. Its function is as follows. Synaptotagmin family member involved in vesicular and membrane trafficking which does not bind Ca(2+). Inhibits clathrin-mediated and bulk endocytosis, functions to ensure precision in vesicle retrieval. Plays an important role in dopamine transmission by regulating endocytosis and the vesicle-recycling process. Essential component of a neuronal vesicular trafficking pathway that differs from the synaptic vesicle trafficking pathway but is crucial for development and synaptic plasticity. In macrophages and microglia, inhibits the conventional cytokine secretion, of at least IL6 and TNF, and phagocytosis. In astrocytes, regulates lysosome exocytosis, mechanism required for the repair of injured astrocyte cell membrane. Required for the ATP13A2-mediated regulation of the autophagy-lysosome pathway. This Homo sapiens (Human) protein is Synaptotagmin-11.